The sequence spans 451 residues: 3-phosphoshikimate 1-carboxyvinyltransferase (451 aa).

3 residues coordinate 3-phosphoshikimate: K38, S39, and R43. K38 contacts phosphoenolpyruvate. Residues G111 and R140 each coordinate phosphoenolpyruvate. Residues S185, Q187, D335, and K362 each coordinate 3-phosphoshikimate. Residue Q187 participates in phosphoenolpyruvate binding. D335 serves as the catalytic Proton acceptor. R366 and R408 together coordinate phosphoenolpyruvate.

Belongs to the EPSP synthase family. As to quaternary structure, monomer.

The protein localises to the cytoplasm. The enzyme catalyses 3-phosphoshikimate + phosphoenolpyruvate = 5-O-(1-carboxyvinyl)-3-phosphoshikimate + phosphate. The protein operates within metabolic intermediate biosynthesis; chorismate biosynthesis; chorismate from D-erythrose 4-phosphate and phosphoenolpyruvate: step 6/7. Catalyzes the transfer of the enolpyruvyl moiety of phosphoenolpyruvate (PEP) to the 5-hydroxyl of shikimate-3-phosphate (S3P) to produce enolpyruvyl shikimate-3-phosphate and inorganic phosphate. The polypeptide is 3-phosphoshikimate 1-carboxyvinyltransferase (Crocosphaera subtropica (strain ATCC 51142 / BH68) (Cyanothece sp. (strain ATCC 51142))).